The primary structure comprises 305 residues: UDP-3-O-acyl-N-acetylglucosamine deacetylase (305 aa).

Zn(2+)-binding residues include H79, H238, and D242. The active-site Proton donor is the H265.

Belongs to the LpxC family. Zn(2+) is required as a cofactor.

The catalysed reaction is a UDP-3-O-[(3R)-3-hydroxyacyl]-N-acetyl-alpha-D-glucosamine + H2O = a UDP-3-O-[(3R)-3-hydroxyacyl]-alpha-D-glucosamine + acetate. Its pathway is glycolipid biosynthesis; lipid IV(A) biosynthesis; lipid IV(A) from (3R)-3-hydroxytetradecanoyl-[acyl-carrier-protein] and UDP-N-acetyl-alpha-D-glucosamine: step 2/6. Functionally, catalyzes the hydrolysis of UDP-3-O-myristoyl-N-acetylglucosamine to form UDP-3-O-myristoylglucosamine and acetate, the committed step in lipid A biosynthesis. This is UDP-3-O-acyl-N-acetylglucosamine deacetylase from Edwardsiella ictaluri (strain 93-146).